Reading from the N-terminus, the 374-residue chain is Speckle-type POZ protein B (374 aa).

Positions lysine 31 to valine 161 constitute an MATH domain. Residues valine 71–glycine 191 are required for nuclear localization. The 125-residue stretch at glutamine 173–leucine 297 folds into the BTB domain. The interval leucine 297 to serine 355 is homodimerization.

The protein belongs to the Tdpoz family. As to quaternary structure, homodimer. Part of cullin-RING-based BCR (BTB-CUL3-RBX1) E3 ubiquitin-protein ligase complexes that contain CUL3 and SPOP, plus a target protein.

It is found in the nucleus. The protein localises to the nucleus speckle. It participates in protein modification; protein ubiquitination. Functionally, component of a cullin-RING-based BCR (BTB-CUL3-RBX1) E3 ubiquitin-protein ligase complex that mediates the ubiquitination of target proteins, leading most often to their proteasomal degradation. In Xenopus laevis (African clawed frog), this protein is Speckle-type POZ protein B (spop-b).